The primary structure comprises 70 residues: Putative membrane protein insertion efficiency factor (70 aa).

The protein belongs to the UPF0161 family.

It localises to the cell membrane. Its function is as follows. Could be involved in insertion of integral membrane proteins into the membrane. The chain is Putative membrane protein insertion efficiency factor from Moorella thermoacetica (strain ATCC 39073 / JCM 9320).